The following is a 456-amino-acid chain: 5-hydroxytryptamine receptor 3E (456 aa).

The first 25 residues, 1–25 (MEGSWFHRKRFSFYLLLGFLLQGRG), serve as a signal peptide directing secretion. The Extracellular segment spans residues 26-248 (VTFTINCSGF…FYVAIRRRPS (223 aa)). Cysteine 162 and cysteine 176 form a disulfide bridge. An N-linked (GlcNAc...) asparagine glycan is attached at asparagine 175. Residues 249-269 (LYVINLLVPSGFLVAIDALSF) traverse the membrane as a helical segment. Topologically, residues 270–282 (YLPVKSGNRVPFK) are cytoplasmic. The helical transmembrane segment at 283-303 (ITLLLGYNVFLLMMSDLLPTS) threads the bilayer. Residues 304–307 (GTPL) lie on the Extracellular side of the membrane. A helical transmembrane segment spans residues 308–328 (IGVYFALCLSLMVGSLLETIF). The Cytoplasmic segment spans residues 329 to 433 (ITHLLHVATT…WLQFSHAMDA (105 aa)). The interval 401 to 432 (TGGSEWTRAQREHEAQKQHSVELWLQFSHAMD) is HA-stretch; determines single-channel conductance in 5-HT3 receptors. The helical transmembrane segment at 434-454 (MLFRLYLLFMASSIITVICLW) threads the bilayer. Residues 455–456 (NT) are Extracellular-facing.

This sequence belongs to the ligand-gated ion channel (TC 1.A.9) family. 5-hydroxytryptamine receptor (TC 1.A.9.2) subfamily. HTR3E sub-subfamily. In terms of assembly, forms homopentameric as well as heteropentameric serotonin-activated cation-selective channel complexes with HTR3A. The homomeric complex is not functional. Heteropentameric complexes display properties which resemble that of neuronal serotonin-activated channels in vivo. In terms of tissue distribution, expressed in adult colon and intestine.

The protein resides in the postsynaptic cell membrane. It is found in the cell membrane. The enzyme catalyses Na(+)(in) = Na(+)(out). The catalysed reaction is K(+)(in) = K(+)(out). It carries out the reaction Ca(2+)(in) = Ca(2+)(out). Its function is as follows. Forms serotonin (5-hydroxytryptamine/5-HT3)-activated cation-selective channel complexes, which when activated cause fast, depolarizing responses in neurons. This chain is 5-hydroxytryptamine receptor 3E, found in Homo sapiens (Human).